Here is a 408-residue protein sequence, read N- to C-terminus: Aminoacylase-1A (408 aa).

His80 contacts Zn(2+). Residue Asp82 is part of the active site. Position 113 (Asp113) interacts with Zn(2+). Glu147 acts as the Proton acceptor in catalysis. Glu148, Glu175, and His373 together coordinate Zn(2+). Ser408 bears the Phosphoserine mark.

Belongs to the peptidase M20A family. As to quaternary structure, homodimer. The cofactor is Zn(2+). The N-terminus is blocked.

It localises to the cytoplasm. It carries out the reaction an N-acyl-L-amino acid + H2O = an L-alpha-amino acid + a carboxylate. It catalyses the reaction an N-acetyl-L-cysteine-S-conjugate + H2O = an S-substituted L-cysteine + acetate. Its function is as follows. Involved in the hydrolysis of N-acylated or N-acetylated amino acids (except L-aspartate). The protein is Aminoacylase-1A (Acy1a) of Rattus norvegicus (Rat).